The primary structure comprises 443 residues: Ribosomal protein uS12 methylthiotransferase RimO (443 aa).

The MTTase N-terminal domain occupies 10-120 (PRVGFVSLGC…VMAAVHAQCP (111 aa)). 6 residues coordinate [4Fe-4S] cluster: Cys19, Cys55, Cys84, Cys152, Cys156, and Cys159. Residues 138–375 (LTPRHYAYLK…MALQAEISAR (238 aa)) enclose the Radical SAM core domain. The TRAM domain maps to 378–443 (ARRVGTECTV…DEHDLYGRVL (66 aa)).

The protein belongs to the methylthiotransferase family. RimO subfamily. Requires [4Fe-4S] cluster as cofactor.

It localises to the cytoplasm. The enzyme catalyses L-aspartate(89)-[ribosomal protein uS12]-hydrogen + (sulfur carrier)-SH + AH2 + 2 S-adenosyl-L-methionine = 3-methylsulfanyl-L-aspartate(89)-[ribosomal protein uS12]-hydrogen + (sulfur carrier)-H + 5'-deoxyadenosine + L-methionine + A + S-adenosyl-L-homocysteine + 2 H(+). Functionally, catalyzes the methylthiolation of an aspartic acid residue of ribosomal protein uS12. The protein is Ribosomal protein uS12 methylthiotransferase RimO of Alkalilimnicola ehrlichii (strain ATCC BAA-1101 / DSM 17681 / MLHE-1).